The chain runs to 106 residues: ATP-dependent Clp protease adapter protein ClpS (106 aa).

It belongs to the ClpS family. As to quaternary structure, binds to the N-terminal domain of the chaperone ClpA.

Involved in the modulation of the specificity of the ClpAP-mediated ATP-dependent protein degradation. The polypeptide is ATP-dependent Clp protease adapter protein ClpS (Edwardsiella ictaluri (strain 93-146)).